We begin with the raw amino-acid sequence, 889 residues long: Coatomer subunit beta' (889 aa).

WD repeat units follow at residues 11–41 (NRSD…ELWN), 53–83 (VTET…RVFN), 95–125 (AHPD…KLWN), 138–169 (GHEH…KVWS), 182–214 (GQER…KIWD), and 226–256 (GHMS…KIWN). Serine 326 bears the Phosphoserine mark. Residues 806–889 (CGAEGLPGSS…AVPEPVEEES (84 aa)) form a disordered region. The segment covering 836–864 (DENKEAEVEDSEFKESNSEAVEAEKKEEE) has biased composition (basic and acidic residues). Residues 866-879 (PQQQQSEQQPEQGE) are compositionally biased toward low complexity.

The protein belongs to the WD repeat COPB2 family. As to quaternary structure, oligomeric complex that consists of at least the alpha, beta, beta', gamma, delta, epsilon and zeta subunits. Interacts with the ESCRT-0 subunit VPS27.

Its subcellular location is the cytoplasm. It is found in the golgi apparatus membrane. The protein localises to the cytoplasmic vesicle. The protein resides in the COPI-coated vesicle membrane. Functionally, the coatomer is a cytosolic protein complex that binds to dilysine motifs and reversibly associates with Golgi non-clathrin-coated vesicles, which further mediate biosynthetic protein transport from the ER, via the Golgi up to the trans Golgi network. Coatomer complex is required for budding from Golgi membranes, and is essential for the retrograde Golgi-to-ER transport of dilysine-tagged proteins. The chain is Coatomer subunit beta' (SEC27) from Saccharomyces cerevisiae (strain ATCC 204508 / S288c) (Baker's yeast).